The primary structure comprises 176 residues: NAD(P)H-quinone oxidoreductase subunit J (176 aa).

A compositionally biased stretch (polar residues) spans 1-10 (MSETPTSPNQ). The segment at 1–22 (MSETPTSPNQDLPEAPQAGPLS) is disordered.

Belongs to the complex I 30 kDa subunit family. NDH-1 can be composed of about 15 different subunits; different subcomplexes with different compositions have been identified which probably have different functions.

Its subcellular location is the cellular thylakoid membrane. It catalyses the reaction a plastoquinone + NADH + (n+1) H(+)(in) = a plastoquinol + NAD(+) + n H(+)(out). The enzyme catalyses a plastoquinone + NADPH + (n+1) H(+)(in) = a plastoquinol + NADP(+) + n H(+)(out). Its function is as follows. NDH-1 shuttles electrons from an unknown electron donor, via FMN and iron-sulfur (Fe-S) centers, to quinones in the respiratory and/or the photosynthetic chain. The immediate electron acceptor for the enzyme in this species is believed to be plastoquinone. Couples the redox reaction to proton translocation, and thus conserves the redox energy in a proton gradient. Cyanobacterial NDH-1 also plays a role in inorganic carbon-concentration. This Synechococcus sp. (strain RCC307) protein is NAD(P)H-quinone oxidoreductase subunit J.